Reading from the N-terminus, the 291-residue chain is Foldase protein PrsA 2 (291 aa).

Positions Met1–Ala20 are cleaved as a signal peptide. The N-palmitoyl cysteine moiety is linked to residue Cys21. Cys21 is lipidated: S-diacylglycerol cysteine. Positions Gln135–Lys226 constitute a PpiC domain.

This sequence belongs to the PrsA family.

The protein resides in the cell membrane. It carries out the reaction [protein]-peptidylproline (omega=180) = [protein]-peptidylproline (omega=0). Functionally, plays a major role in protein secretion by helping the post-translocational extracellular folding of several secreted proteins. This Listeria innocua serovar 6a (strain ATCC BAA-680 / CLIP 11262) protein is Foldase protein PrsA 2 (prsA2).